A 463-amino-acid polypeptide reads, in one-letter code: Exodeoxyribonuclease 7 large subunit (463 aa).

Belongs to the XseA family. Heterooligomer composed of large and small subunits.

The protein resides in the cytoplasm. The catalysed reaction is Exonucleolytic cleavage in either 5'- to 3'- or 3'- to 5'-direction to yield nucleoside 5'-phosphates.. Its function is as follows. Bidirectionally degrades single-stranded DNA into large acid-insoluble oligonucleotides, which are then degraded further into small acid-soluble oligonucleotides. The polypeptide is Exodeoxyribonuclease 7 large subunit (Bordetella pertussis (strain Tohama I / ATCC BAA-589 / NCTC 13251)).